Consider the following 680-residue polypeptide: Probable galacturonosyltransferase 3 (680 aa).

Over 1 to 6 (MTTFST) the chain is Cytoplasmic. The helical; Signal-anchor for type II membrane protein transmembrane segment at 7-27 (CAAFLSLVVVLHAVHVGGAIL) threads the bilayer. Over 28 to 680 (ESQAPHRELK…PYLRRCDINE (653 aa)) the chain is Lumenal. A disordered region spans residues 118 to 146 (SFQNDTGMEDNASHSTTNQTDESENQFPN). 10 N-linked (GlcNAc...) asparagine glycosylation sites follow: Asn-121, Asn-128, Asn-135, Asn-239, Asn-386, Asn-438, Asn-545, Asn-578, Asn-610, and Asn-631. Over residues 130–145 (SHSTTNQTDESENQFP) the composition is skewed to polar residues.

Belongs to the glycosyltransferase 8 family. In terms of tissue distribution, expressed in roots, inflorescences, siliques, leaves and stems.

The protein resides in the golgi apparatus membrane. It participates in glycan metabolism; pectin biosynthesis. In terms of biological role, may be involved in pectin and/or xylans biosynthesis in cell walls. In Arabidopsis thaliana (Mouse-ear cress), this protein is Probable galacturonosyltransferase 3 (GAUT3).